A 230-amino-acid chain; its full sequence is Iron-dependent repressor IdeR (230 aa).

An HTH dtxR-type domain is found at 4–65 (LVDTTEMYLR…VAGNRHLELT (62 aa)).

Belongs to the DtxR/MntR family. In terms of assembly, homodimer.

Its subcellular location is the cytoplasm. Its function is as follows. Metal-dependent DNA-binding protein that controls transcription of many genes involved in iron metabolism. The chain is Iron-dependent repressor IdeR (ideR) from Mycobacterium leprae (strain TN).